The following is a 141-amino-acid chain: Photosystem II protein PSBR, chloroplastic (141 aa).

The transit peptide at 1-27 (MATMQISAKGLAPLRPRVSSRRVVKPV) directs the protein to the chloroplast. T34 and T37 each carry phosphothreonine. S43 is subject to Phosphoserine. Residues 114–134 (GLIAWAGLVLVLLAVGVNLII) form a helical membrane-spanning segment.

Belongs to the psbR family.

Its subcellular location is the plastid. The protein resides in the chloroplast thylakoid membrane. Functionally, associated with the oxygen-evolving complex of photosystem II (PSII). Is required for the stable binding of LHCSR3 to PSII-LHCII supercomplexes and is essential for efficient energy-dependent quenching and the integrity of the PSII-LHCII-LHCSR3 supercomplex under continuous high light. This Chlamydomonas reinhardtii (Chlamydomonas smithii) protein is Photosystem II protein PSBR, chloroplastic.